Here is a 541-residue protein sequence, read N- to C-terminus: Multidrug transporter protein MdtP (541 aa).

Transmembrane regions (helical) follow at residues 14–34 (LLITGLIIAMFFSALDGTIVG), 40–60 (IVGDLGGLSMMTWLTTAYLLT), 79–99 (IVYVSGLIIFMAASALCGMAN), 112–132 (GIGGGIMMPMAMIVIGDLFTG), 141–161 (VFGAIYGLASVIGPQIGGWIV), 168–188 (WVFYINLPVGIIAVIFIARGL), 201–221 (IAGIFTMIVGVVSLLLALSFG), 229–249 (SWQILGLFALALIGIVSFIIV), 273–293 (LIGFFMSIGMFGAITFVPFFM), 307–327 (IMTPMMISMIITSIIGGQLVY), 329–349 (IGIKPQIITGMLVMAGGFLLL), 359–379 (LVATSFMAIIGLGMGLVMPIL), 401–420 (FFRSIGGTFGITMLGAVMNA), and 492–512 (LHSVFYTGLIFIAVGAVFTLF).

This sequence belongs to the major facilitator superfamily. EmrB family.

The protein resides in the cell membrane. In terms of biological role, multidrug efflux transporter. Contributes to resistance to several antibiotics, including fusidic acid, novobiocin, streptomycin and actinomycin, possibly by pumping these structurally unrelated antibiotics out of cells. The chain is Multidrug transporter protein MdtP from Bacillus subtilis (strain 168).